A 143-amino-acid chain; its full sequence is MPAKKKVAAVVKVAPQAGQATPAPPVGMALGPHGVNIMEFCKAYNAQTEGQRGNIVPVEITIYEDRTFSFVLKTPPAAELIKKAAGIKKGTENPATHKVGKISKDQVREIAETKMPDLNANDIEAAMKIVAGTARSMGVEVEV.

It belongs to the universal ribosomal protein uL11 family. Part of the ribosomal stalk of the 50S ribosomal subunit. Interacts with L10 and the large rRNA to form the base of the stalk. L10 forms an elongated spine to which L12 dimers bind in a sequential fashion forming a multimeric L10(L12)X complex. Post-translationally, one or more lysine residues are methylated.

In terms of biological role, forms part of the ribosomal stalk which helps the ribosome interact with GTP-bound translation factors. This is Large ribosomal subunit protein uL11 from Cutibacterium acnes (strain DSM 16379 / KPA171202) (Propionibacterium acnes).